A 265-amino-acid chain; its full sequence is Hydroxyethylthiazole kinase (265 aa).

Methionine 36 lines the substrate pocket. ATP-binding residues include lysine 112 and serine 160. Substrate is bound at residue glycine 187.

The protein belongs to the Thz kinase family. Mg(2+) is required as a cofactor.

The catalysed reaction is 5-(2-hydroxyethyl)-4-methylthiazole + ATP = 4-methyl-5-(2-phosphooxyethyl)-thiazole + ADP + H(+). It participates in cofactor biosynthesis; thiamine diphosphate biosynthesis; 4-methyl-5-(2-phosphoethyl)-thiazole from 5-(2-hydroxyethyl)-4-methylthiazole: step 1/1. Its function is as follows. Catalyzes the phosphorylation of the hydroxyl group of 4-methyl-5-beta-hydroxyethylthiazole (THZ). The protein is Hydroxyethylthiazole kinase of Clostridium perfringens (strain 13 / Type A).